The primary structure comprises 459 residues: uncharacterized protein (459 aa).

2 consecutive transmembrane segments (helical) span residues 53-75 and 111-133; these read IPLLPVLALSVGALTVLGQGLTL and ARIARVLLLVAGVFTLVIVCLCA. The tract at residues 174–196 is disordered; it reads HLDNPSAPHPSENPQSRAHPKQN.

The protein resides in the cell membrane. This is an uncharacterized protein from Treponema pallidum (strain Nichols).